The chain runs to 354 residues: Fructose-1,6-bisphosphatase class 1 (354 aa).

Glu112, Asp134, Leu136, and Asp137 together coordinate Mg(2+). Residues 137-140, Asn229, Tyr257, and Lys287 contribute to the substrate site; that span reads DGSS. Glu293 lines the Mg(2+) pocket.

It belongs to the FBPase class 1 family. As to quaternary structure, homotetramer. Mg(2+) serves as cofactor.

It is found in the cytoplasm. The enzyme catalyses beta-D-fructose 1,6-bisphosphate + H2O = beta-D-fructose 6-phosphate + phosphate. It functions in the pathway carbohydrate biosynthesis; Calvin cycle. The polypeptide is Fructose-1,6-bisphosphatase class 1 (Trichodesmium erythraeum (strain IMS101)).